The primary structure comprises 364 residues: tRNA-specific 2-thiouridylase MnmA 1 (364 aa).

ATP-binding positions include G11–S18 and F37. The Nucleophile role is filled by C96. An intrachain disulfide couples C96 to C193. G120 provides a ligand contact to ATP. Residues K142 to Q144 are interaction with tRNA. C193 serves as the catalytic Cysteine persulfide intermediate. The segment at R309–Y310 is interaction with tRNA.

This sequence belongs to the MnmA/TRMU family.

It is found in the cytoplasm. The enzyme catalyses S-sulfanyl-L-cysteinyl-[protein] + uridine(34) in tRNA + AH2 + ATP = 2-thiouridine(34) in tRNA + L-cysteinyl-[protein] + A + AMP + diphosphate + H(+). Functionally, catalyzes the 2-thiolation of uridine at the wobble position (U34) of tRNA, leading to the formation of s(2)U34. The protein is tRNA-specific 2-thiouridylase MnmA 1 of Bacteroides fragilis (strain YCH46).